The primary structure comprises 325 residues: Tetraacyldisaccharide 4'-kinase (325 aa).

Residue 55–62 participates in ATP binding; sequence TAGGNGKT.

Belongs to the LpxK family.

The enzyme catalyses a lipid A disaccharide + ATP = a lipid IVA + ADP + H(+). The protein operates within glycolipid biosynthesis; lipid IV(A) biosynthesis; lipid IV(A) from (3R)-3-hydroxytetradecanoyl-[acyl-carrier-protein] and UDP-N-acetyl-alpha-D-glucosamine: step 6/6. Transfers the gamma-phosphate of ATP to the 4'-position of a tetraacyldisaccharide 1-phosphate intermediate (termed DS-1-P) to form tetraacyldisaccharide 1,4'-bis-phosphate (lipid IVA). This chain is Tetraacyldisaccharide 4'-kinase, found in Salmonella paratyphi A (strain ATCC 9150 / SARB42).